We begin with the raw amino-acid sequence, 143 residues long: uncharacterized protein (143 aa).

The tract at residues 111–143 (VTQDISHTSGKSPTPKAKSSSPKKSKKKNWIPL) is disordered. Low complexity predominate over residues 119-130 (SGKSPTPKAKSS). Residues 131-143 (SPKKSKKKNWIPL) show a composition bias toward basic residues.

Belongs to the chlamydial CPn_0742/CT_635/TC_0003 family.

This is an uncharacterized protein from Chlamydia muridarum (strain MoPn / Nigg).